We begin with the raw amino-acid sequence, 298 residues long: Protease HtpX homolog (298 aa).

Transmembrane regions (helical) follow at residues Val-14–Leu-34 and Tyr-39–Phe-59. Position 143 (His-143) interacts with Zn(2+). Glu-144 is an active-site residue. His-147 is a Zn(2+) binding site. The next 2 membrane-spanning stretches (helical) occupy residues Ile-158–Trp-178 and Ile-197–Ile-217. Glu-226 contacts Zn(2+).

This sequence belongs to the peptidase M48B family. Requires Zn(2+) as cofactor.

The protein localises to the cell membrane. The sequence is that of Protease HtpX homolog from Streptococcus pyogenes serotype M6 (strain ATCC BAA-946 / MGAS10394).